The following is a 63-amino-acid chain: uncharacterized protein (63 aa).

This is an uncharacterized protein from Saccharomyces cerevisiae (strain ATCC 204508 / S288c) (Baker's yeast).